Consider the following 196-residue polypeptide: Cilia- and flagella-associated protein 107 (196 aa).

Mn stretches follow at residues 47 to 62 (TPQCIYRKEYVPMPDH) and 97 to 109 (ISTYDDHYNRHNY).

In terms of assembly, microtubule inner protein component of sperm flagellar doublet microtubules.

It localises to the cytoplasm. The protein localises to the cytoskeleton. The protein resides in the cilium axoneme. Its subcellular location is the flagellum axoneme. In terms of biological role, microtubule inner protein (MIP) part of the dynein-decorated doublet microtubules (DMTs) in cilia axoneme, which is required for motile cilia beating. This Mus musculus (Mouse) protein is Cilia- and flagella-associated protein 107.